A 302-amino-acid chain; its full sequence is 4-hydroxy-tetrahydrodipicolinate synthase (302 aa).

Thr55 provides a ligand contact to pyruvate. Tyr144 serves as the catalytic Proton donor/acceptor. The active-site Schiff-base intermediate with substrate is Lys172. Residue Val214 coordinates pyruvate.

It belongs to the DapA family. In terms of assembly, homotetramer; dimer of dimers.

It localises to the cytoplasm. It catalyses the reaction L-aspartate 4-semialdehyde + pyruvate = (2S,4S)-4-hydroxy-2,3,4,5-tetrahydrodipicolinate + H2O + H(+). It functions in the pathway amino-acid biosynthesis; L-lysine biosynthesis via DAP pathway; (S)-tetrahydrodipicolinate from L-aspartate: step 3/4. In terms of biological role, catalyzes the condensation of (S)-aspartate-beta-semialdehyde [(S)-ASA] and pyruvate to 4-hydroxy-tetrahydrodipicolinate (HTPA). This chain is 4-hydroxy-tetrahydrodipicolinate synthase, found in Synechococcus sp. (strain CC9902).